Reading from the N-terminus, the 665-residue chain is FAD-dependent oxidoreductase domain-containing protein 2 (665 aa).

Positions Met1–Cys17 are cleaved as a signal peptide. Asn136 is a glycosylation site (N-linked (GlcNAc...) asparagine). A disordered region spans residues Arg642–Leu665. The short motif at Lys662 to Leu665 is the Prevents secretion from ER element.

This sequence belongs to the FOXRED2 family. As to quaternary structure, interacts with SEL1L. May interact with OS9 and DNAJC10. Interacts with TXNDC16. The cofactor is FAD. N-glycosylated.

The protein resides in the endoplasmic reticulum lumen. In terms of biological role, probable flavoprotein which may function in endoplasmic reticulum associated degradation (ERAD). May bind non-native proteins in the endoplasmic reticulum and target them to the ubiquitination machinery for subsequent degradation. This Mus musculus (Mouse) protein is FAD-dependent oxidoreductase domain-containing protein 2.